Here is a 385-residue protein sequence, read N- to C-terminus: Mannitol-1-phosphate 5-dehydrogenase (385 aa).

3-14 (DVHFGAGNIGRG) serves as a coordination point for NAD(+).

Belongs to the mannitol dehydrogenase family.

It carries out the reaction D-mannitol 1-phosphate + NAD(+) = beta-D-fructose 6-phosphate + NADH + H(+). This chain is Mannitol-1-phosphate 5-dehydrogenase, found in Lactiplantibacillus plantarum (strain ATCC BAA-793 / NCIMB 8826 / WCFS1) (Lactobacillus plantarum).